The primary structure comprises 263 residues: Acyl-[acyl-carrier-protein]--UDP-N-acetylglucosamine O-acyltransferase (263 aa).

Belongs to the transferase hexapeptide repeat family. LpxA subfamily. In terms of assembly, homotrimer.

It localises to the cytoplasm. The enzyme catalyses a (3R)-hydroxyacyl-[ACP] + UDP-N-acetyl-alpha-D-glucosamine = a UDP-3-O-[(3R)-3-hydroxyacyl]-N-acetyl-alpha-D-glucosamine + holo-[ACP]. It functions in the pathway glycolipid biosynthesis; lipid IV(A) biosynthesis; lipid IV(A) from (3R)-3-hydroxytetradecanoyl-[acyl-carrier-protein] and UDP-N-acetyl-alpha-D-glucosamine: step 1/6. Functionally, involved in the biosynthesis of lipid A, a phosphorylated glycolipid that anchors the lipopolysaccharide to the outer membrane of the cell. This chain is Acyl-[acyl-carrier-protein]--UDP-N-acetylglucosamine O-acyltransferase, found in Xanthomonas euvesicatoria pv. vesicatoria (strain 85-10) (Xanthomonas campestris pv. vesicatoria).